The primary structure comprises 309 residues: Ornithine carbamoyltransferase (309 aa).

Carbamoyl phosphate is bound by residues 56 to 59 (STRT), Gln83, Arg107, and 134 to 137 (HPCQ). Residues Asn165, Asp223, and 227–228 (SM) each bind L-ornithine. Residues 263 to 264 (CL) and Arg291 contribute to the carbamoyl phosphate site.

This sequence belongs to the aspartate/ornithine carbamoyltransferase superfamily. OTCase family.

The protein resides in the cytoplasm. It catalyses the reaction carbamoyl phosphate + L-ornithine = L-citrulline + phosphate + H(+). The protein operates within amino-acid biosynthesis; L-arginine biosynthesis; L-arginine from L-ornithine and carbamoyl phosphate: step 1/3. Functionally, reversibly catalyzes the transfer of the carbamoyl group from carbamoyl phosphate (CP) to the N(epsilon) atom of ornithine (ORN) to produce L-citrulline. This is Ornithine carbamoyltransferase from Burkholderia mallei (strain ATCC 23344).